The chain runs to 156 residues: MPRKGHIVKRDVLPDPIYNSKLITRIVNTIMEDGKKGTAQGILYGALNRIKDQTGREAIDVFNEALNNISPILEVRARRIGGQNYQVPVEVRPERRQALALRWLVQYAKKRNEKTMEERLAKEILDASQGTGAAVKKREEVHKMAEANKAFAHYRW.

The protein belongs to the universal ribosomal protein uS7 family. Part of the 30S ribosomal subunit. Contacts proteins S9 and S11.

In terms of biological role, one of the primary rRNA binding proteins, it binds directly to 16S rRNA where it nucleates assembly of the head domain of the 30S subunit. Is located at the subunit interface close to the decoding center, probably blocks exit of the E-site tRNA. In Acholeplasma laidlawii (strain PG-8A), this protein is Small ribosomal subunit protein uS7.